A 194-amino-acid chain; its full sequence is uncharacterized protein (194 aa).

This is an uncharacterized protein from Escherichia coli (strain K12).